Consider the following 441-residue polypeptide: tRNA-2-methylthio-N(6)-dimethylallyladenosine synthase (441 aa).

An MTTase N-terminal domain is found at 2–117 (KGLYIKSYGC…LPELLVKAHR (116 aa)). Cys11, Cys47, Cys80, Cys157, Cys161, and Cys164 together coordinate [4Fe-4S] cluster. The Radical SAM core domain occupies 143–374 (KNQETSAFIS…QKLLREQQLA (232 aa)).

This sequence belongs to the methylthiotransferase family. MiaB subfamily. In terms of assembly, monomer. The cofactor is [4Fe-4S] cluster.

It is found in the cytoplasm. The enzyme catalyses N(6)-dimethylallyladenosine(37) in tRNA + (sulfur carrier)-SH + AH2 + 2 S-adenosyl-L-methionine = 2-methylsulfanyl-N(6)-dimethylallyladenosine(37) in tRNA + (sulfur carrier)-H + 5'-deoxyadenosine + L-methionine + A + S-adenosyl-L-homocysteine + 2 H(+). In terms of biological role, catalyzes the methylthiolation of N6-(dimethylallyl)adenosine (i(6)A), leading to the formation of 2-methylthio-N6-(dimethylallyl)adenosine (ms(2)i(6)A) at position 37 in tRNAs that read codons beginning with uridine. The sequence is that of tRNA-2-methylthio-N(6)-dimethylallyladenosine synthase from Ehrlichia canis (strain Jake).